Here is a 130-residue protein sequence, read N- to C-terminus: Large ribosomal subunit protein bL17 (130 aa).

This sequence belongs to the bacterial ribosomal protein bL17 family. Part of the 50S ribosomal subunit. Contacts protein L32.

The sequence is that of Large ribosomal subunit protein bL17 from Buchnera aphidicola subsp. Acyrthosiphon pisum (strain APS) (Acyrthosiphon pisum symbiotic bacterium).